The chain runs to 309 residues: Ribosomal RNA small subunit methyltransferase H (309 aa).

S-adenosyl-L-methionine is bound by residues Gly41 to His43, Asp61, Phe85, Asp102, and Gln109.

The protein belongs to the methyltransferase superfamily. RsmH family.

It is found in the cytoplasm. It carries out the reaction cytidine(1402) in 16S rRNA + S-adenosyl-L-methionine = N(4)-methylcytidine(1402) in 16S rRNA + S-adenosyl-L-homocysteine + H(+). Its function is as follows. Specifically methylates the N4 position of cytidine in position 1402 (C1402) of 16S rRNA. The protein is Ribosomal RNA small subunit methyltransferase H of Albidiferax ferrireducens (strain ATCC BAA-621 / DSM 15236 / T118) (Rhodoferax ferrireducens).